Reading from the N-terminus, the 937-residue chain is MIFPIGIPMISKKRKSAQEAVSLREAAERRSQFARVPARSVSAPPRKKWFRSKQQLSGAADGMDGSSRAGSQEIVCDEFTKKLVAAITTWHDIHSSLLQLSIERSSNDSNEEHENVSVSSESSWSSASDSESDEDSATGRDSTNNHLSASAARFSISNPDLTNCQIKQMFPEMADHWRKALAKSPVVRRTAADQETSNPVNKHRSSRYWIEDEGDYHILPSEHVWLPSSTGSSASADSECYVGEKDCRRSGEKRRCAACHIVAHTNCFSLLAKLNLNCKTTFRDYATKKTPSKESTDGLTAHHWVHKWRHEGRCNTCAKSFQQKMFFQGKEKKETIAVTCSWCKESYHLKNCFARDKLEERCNRGALKEMIVPPTWILRLANRKRSSRTPSHPRKHKKSHRQFVVKPTDLWSSGPSQPLLVFVNPKSGGNKGSKALHTLCWLLNPRQVFDITSLKGPKFGLEMFRKVVTQLRILVCGGDGTVGWVLSTLDNLNWPAYPPMAIMPLGTGNDLARCMGWGGVFSDEPISQLMQAILHETIVTHLDRWRIDVEPNTSCNLEEEDDGMQSALPLTVMTNYFSIGADAHVALQFHHSRSANPQMLNSRLKNRIAYGGLGTIDLFKRSWKDLCEYITLECDGVDVTPRIKELKLHCILFHNITYYAGGTIPWGESSDNKPSCCDGKVEVLGFTTATLAALQMGGKGERIAQCSRVRVITNKAIPMQVDGEPCLLAPSIITLGFHSKVPMLKREKKTPCTPNLMRRGTRYGQKDSQVQSTSLIIQLPVIVVGRADYDNYKDCFERLKDTAYEIGIVNVESEAELDSARVLIQRLLVEHNSLPYEPDKNWRFLDYVSNAEEGTFRVSRQQEHVQSVSDVCNTDECLLILDHAFPSITDREAVELFQPQQPIPSTSTSAAPRYHNSRRISETLRIVLSSDAQETHL.

Disordered regions lie at residues 44–69 and 106–145; these read PPRK…SSRA and SNDS…STNN. The span at 116–129 shows a compositional bias: low complexity; it reads VSVSSESSWSSASD. The 138-residue stretch at 414–551 folds into the DAGKc domain; it reads GPSQPLLVFV…LDRWRIDVEP (138 aa).

It belongs to the eukaryotic diacylglycerol kinase family.

It carries out the reaction a 1,2-diacyl-sn-glycerol + ATP = a 1,2-diacyl-sn-glycero-3-phosphate + ADP + H(+). The polypeptide is Putative diacylglycerol kinase K06A1.6 (dgk-5) (Caenorhabditis elegans).